A 220-amino-acid polypeptide reads, in one-letter code: Putative NAD(P)H nitroreductase (220 aa).

Residue 155–160 (GASALG) coordinates NAD(+).

The protein belongs to the nitroreductase family. FMN is required as a cofactor.

The protein is Putative NAD(P)H nitroreductase of Haemophilus influenzae (strain ATCC 51907 / DSM 11121 / KW20 / Rd).